The chain runs to 507 residues: Putative propionyl-CoA carboxylase beta chain (507 aa).

The span at 1-25 (MNEHMDHFYTKRKQAEEGGGREKLA) shows a compositional bias: basic and acidic residues. The segment at 1-30 (MNEHMDHFYTKRKQAEEGGGREKLAQQRQK) is disordered. Positions 1–254 (MNEHMDHFYT…NGRTTEPKPE (254 aa)) constitute a CoA carboxyltransferase N-terminal domain. The carboxyltransferase stretch occupies residues 1–501 (MNEHMDHFYT…HKTEERPKKK (501 aa)). Positions 256–501 (EASRPLLNRL…HKTEERPKKK (246 aa)) constitute a CoA carboxyltransferase C-terminal domain.

This sequence belongs to the AccD/PCCB family. As to quaternary structure, probably a dodecamer composed of six biotin-containing alpha subunits and six beta subunits.

The catalysed reaction is propanoyl-CoA + hydrogencarbonate + ATP = (S)-methylmalonyl-CoA + ADP + phosphate + H(+). Its pathway is metabolic intermediate metabolism; propanoyl-CoA degradation; succinyl-CoA from propanoyl-CoA: step 1/3. The protein is Putative propionyl-CoA carboxylase beta chain (yqjD) of Bacillus subtilis (strain 168).